Reading from the N-terminus, the 424-residue chain is Serine--tRNA ligase (424 aa).

Position 230 to 232 (230 to 232 (TSE)) interacts with L-serine. ATP-binding positions include 261-263 (RKE) and Val-277. Glu-284 contributes to the L-serine binding site. 348 to 351 (ELTS) is an ATP binding site. Thr-382 contributes to the L-serine binding site.

It belongs to the class-II aminoacyl-tRNA synthetase family. Type-1 seryl-tRNA synthetase subfamily. Homodimer. The tRNA molecule binds across the dimer.

It is found in the cytoplasm. It catalyses the reaction tRNA(Ser) + L-serine + ATP = L-seryl-tRNA(Ser) + AMP + diphosphate + H(+). The enzyme catalyses tRNA(Sec) + L-serine + ATP = L-seryl-tRNA(Sec) + AMP + diphosphate + H(+). The protein operates within aminoacyl-tRNA biosynthesis; selenocysteinyl-tRNA(Sec) biosynthesis; L-seryl-tRNA(Sec) from L-serine and tRNA(Sec): step 1/1. Its function is as follows. Catalyzes the attachment of serine to tRNA(Ser). Is also able to aminoacylate tRNA(Sec) with serine, to form the misacylated tRNA L-seryl-tRNA(Sec), which will be further converted into selenocysteinyl-tRNA(Sec). This is Serine--tRNA ligase from Nocardioides sp. (strain ATCC BAA-499 / JS614).